The chain runs to 388 residues: Succinyl-diaminopimelate desuccinylase (388 aa).

A Zn(2+)-binding site is contributed by histidine 74. Aspartate 76 is a catalytic residue. Residue aspartate 107 participates in Zn(2+) binding. The Proton acceptor role is filled by glutamate 142. Residues glutamate 143, glutamate 171, and histidine 360 each coordinate Zn(2+).

The protein belongs to the peptidase M20A family. DapE subfamily. Homodimer. Zn(2+) is required as a cofactor. It depends on Co(2+) as a cofactor.

The enzyme catalyses N-succinyl-(2S,6S)-2,6-diaminopimelate + H2O = (2S,6S)-2,6-diaminopimelate + succinate. It functions in the pathway amino-acid biosynthesis; L-lysine biosynthesis via DAP pathway; LL-2,6-diaminopimelate from (S)-tetrahydrodipicolinate (succinylase route): step 3/3. In terms of biological role, catalyzes the hydrolysis of N-succinyl-L,L-diaminopimelic acid (SDAP), forming succinate and LL-2,6-diaminopimelate (DAP), an intermediate involved in the bacterial biosynthesis of lysine and meso-diaminopimelic acid, an essential component of bacterial cell walls. The sequence is that of Succinyl-diaminopimelate desuccinylase from Rhodopseudomonas palustris (strain BisB5).